We begin with the raw amino-acid sequence, 928 residues long: Arf guanine nucleotide exchange factor sec74 (928 aa).

Composition is skewed to polar residues over residues methionine 1–alanine 12 and threonine 57–aspartate 83. Disordered stretches follow at residues methionine 1–serine 152 and serine 227–glycine 249. At serine 67 the chain carries Phosphoserine. 2 stretches are compositionally biased toward low complexity: residues glycine 89–serine 102 and serine 115–serine 132. The SEC7 domain maps to leucine 228–threonine 420. Residues alanine 234–serine 245 are compositionally biased toward polar residues. The PH domain maps to lysine 548–threonine 677.

The protein resides in the cytoplasm. The protein localises to the cell tip. Functionally, guanine nucleotide exchange factor for Arf GTPases, stimulating the nucleotide exchange from the GDP-bound to the GTP-bound form. Involved in vesicular transport. This is Arf guanine nucleotide exchange factor sec74 (sec74) from Schizosaccharomyces pombe (strain 972 / ATCC 24843) (Fission yeast).